A 380-amino-acid chain; its full sequence is Adaptive-response sensory kinase SasA (380 aa).

Positions 20–101 are kaiB-like domain, interacts with KaiC; that stretch reads LLFVANRPGD…QKVDYWWPRW (82 aa). The 224-residue stretch at 157–380 folds into the Histidine kinase domain; it reads LLAHELRNPL…CFHFTLPVYS (224 aa). H160 carries the phosphohistidine; by autocatalysis modification.

In terms of assembly, homotrimer with a small amount of possible homohexamer; a protein fragment of 109-380 is also a homotrimer. Interacts with KaiC, probably as 1 SasA trimer:1 KaiC homohexamer; unphosphorylated SasA has the highest affinity. Homodimer. Binds to the B-loop in the CI domain of KaiC; SasA and KaiB(fs) compete to bind to the CI domain. Binds preferentially to doubly phosphorylated KaiC. In terms of processing, autophosphorylates, probably on His-160.

The catalysed reaction is ATP + protein L-histidine = ADP + protein N-phospho-L-histidine.. Its function is as follows. Member of the two-component regulatory system SasA/RpaA involved in genome-wide circadian gene expression. One of several clock output pathways. Participates in the Kai clock protein complex, the main circadian regulator in cyanobacteria, via its interaction with KaiC. KaiC enhances the autophosphorylation activity of SasA, which then transfers its phosphate group to RpaA to activate it. In addition to its output function, recruits fold-shifted KaiB (KaiB(fs)) to KaiC to cooperatively form the KaiB(6):KaiC(6) complex (independent of SasA kinase activity). Required for robustness of the circadian rhythm of gene expression and is involved in clock output, also required for adaptation to light/dark cycles. The sequence is that of Adaptive-response sensory kinase SasA from Thermosynechococcus vestitus (strain NIES-2133 / IAM M-273 / BP-1).